The following is a 215-amino-acid chain: Large ribosomal subunit protein uL4 (215 aa).

A disordered region spans residues 46–72 (TAKSKNRAEVSGGGRKPWAQKGGGRAR). Positions 56-71 (SGGGRKPWAQKGGGRA) are enriched in gly residues.

Belongs to the universal ribosomal protein uL4 family. As to quaternary structure, part of the 50S ribosomal subunit.

Functionally, one of the primary rRNA binding proteins, this protein initially binds near the 5'-end of the 23S rRNA. It is important during the early stages of 50S assembly. It makes multiple contacts with different domains of the 23S rRNA in the assembled 50S subunit and ribosome. Its function is as follows. Forms part of the polypeptide exit tunnel. This Helicobacter pylori (strain ATCC 700392 / 26695) (Campylobacter pylori) protein is Large ribosomal subunit protein uL4.